Consider the following 423-residue polypeptide: Torsin-4A (423 aa).

A disordered region spans residues 47–68 (PGGGPDVGTGAPRPGCSPRAPR). Phosphoserine is present on residues Ser63 and Ser81. Thr89 carries the post-translational modification Phosphothreonine. Residue Ser106 is modified to Phosphoserine. Residues 122–138 (CLLLLVAIVGFQVLNAI) traverse the membrane as a helical segment. 194 to 201 (GPSGVGKS) is an ATP binding site.

The protein belongs to the ClpA/ClpB family. Torsin subfamily.

It localises to the membrane. In Homo sapiens (Human), this protein is Torsin-4A (TOR4A).